The sequence spans 692 residues: Ribosome-releasing factor 2, mitochondrial (692 aa).

Residues Met1 to Tyr29 constitute a mitochondrion transit peptide. The region spanning Ser31–Glu310 is the tr-type G domain. Residues Ala40 to Thr47, Asp104 to His108, and Asn158 to Asp161 contribute to the GTP site.

This sequence belongs to the TRAFAC class translation factor GTPase superfamily. Classic translation factor GTPase family. EF-G/EF-2 subfamily.

It is found in the mitochondrion. Its function is as follows. Mitochondrial GTPase that mediates the disassembly of ribosomes from messenger RNA at the termination of mitochondrial protein biosynthesis. Not involved in the GTP-dependent ribosomal translocation step during translation elongation. This Drosophila sechellia (Fruit fly) protein is Ribosome-releasing factor 2, mitochondrial.